A 425-amino-acid chain; its full sequence is Serine--tRNA ligase (425 aa).

Residue 233–235 coordinates L-serine; sequence TAE. Residue 264–266 participates in ATP binding; sequence RRE. Glu287 provides a ligand contact to L-serine. 351-354 lines the ATP pocket; sequence EISS. Ser385 is a binding site for L-serine.

Belongs to the class-II aminoacyl-tRNA synthetase family. Type-1 seryl-tRNA synthetase subfamily. As to quaternary structure, homodimer. The tRNA molecule binds across the dimer.

It localises to the cytoplasm. The enzyme catalyses tRNA(Ser) + L-serine + ATP = L-seryl-tRNA(Ser) + AMP + diphosphate + H(+). It carries out the reaction tRNA(Sec) + L-serine + ATP = L-seryl-tRNA(Sec) + AMP + diphosphate + H(+). It functions in the pathway aminoacyl-tRNA biosynthesis; selenocysteinyl-tRNA(Sec) biosynthesis; L-seryl-tRNA(Sec) from L-serine and tRNA(Sec): step 1/1. Its function is as follows. Catalyzes the attachment of serine to tRNA(Ser). Is also able to aminoacylate tRNA(Sec) with serine, to form the misacylated tRNA L-seryl-tRNA(Sec), which will be further converted into selenocysteinyl-tRNA(Sec). This is Serine--tRNA ligase from Prochlorococcus marinus (strain MIT 9215).